We begin with the raw amino-acid sequence, 462 residues long: MAPGLPTAMDRPHFIGIGGAGMSGIAKILAQRGAEVAGSDAKESATADALRALGATVHIGHAAEHLAADASCVVVSSAIREDNPELVRAAELGIPVVHRSDALAALMNGLRPIAVAGTHGKTTTTSMLAVSLSELDLGPSYAIGGDLDAPGSNALHGEGEIFVAEADESDRSFHKYAPEVAIVLNVELDHHANYASMDEIYESFETFAGKIVPGGTLVIAADHEGARELTRRLAGRVRTVTYGESEDADVRILSVVPQGLKSEVTVVLDGAELTFAVSVPGRHYAHNAVAALAAGAALGVPAAELAPALAAYTGVKRRLQLKGEAAGVQVVDSYAHHPTEMTADLEAMRAAVGDARILVLFQPHLFSRTQELGKEMGQALALADASVVLDIYPAREDPIPGVTSELIVEAARAAGADVTPVHDKDASPALVAGMAKAGDLVLTMGAGDVTDLGPRILDELSK.

Residue 117–123 (GTHGKTT) coordinates ATP.

Belongs to the MurCDEF family.

The protein localises to the cytoplasm. The catalysed reaction is UDP-N-acetyl-alpha-D-muramate + L-alanine + ATP = UDP-N-acetyl-alpha-D-muramoyl-L-alanine + ADP + phosphate + H(+). It functions in the pathway cell wall biogenesis; peptidoglycan biosynthesis. In terms of biological role, cell wall formation. The sequence is that of UDP-N-acetylmuramate--L-alanine ligase from Streptomyces coelicolor (strain ATCC BAA-471 / A3(2) / M145).